The sequence spans 340 residues: MGRGRAPCCAKVGLNRGSWTPQEDMRLIAYIQKHGHTNWRALPKQAGLLRCGKSCRLRWINYLRPDLKRGNFTDEEEEAIIRLHGLLGNKWSKIAACLPGRTDNEIKNVWNTHLKKKVAQREKKKAGAGSGDAGTPATAPLSSATSSTTTHNSSGGSDSGDQCGTSREPDATDVCTLQPEDMDVSDMLVDGAPPAAQPMPSPSSSSSLTTCVGGVEELIELPVIDIEPEIWSIIDGESAVARHGGDAAAPCTGTGTAVSTSEAEEAAANDWWLENLEKELGLWGYAEEDTQAHPDLLDHYTGLSPLCALEGDPVSTYFQTGPAAAEPELLVVVEPSAVLL.

2 consecutive HTH myb-type domains span residues 11-63 (KVGL…INYL) and 64-118 (RPDL…KKKV). 2 consecutive DNA-binding regions (H-T-H motif) follow at residues 39–63 (WRAL…INYL) and 91–114 (WSKI…NTHL). Over residues 116–126 (KKVAQREKKKA) the composition is skewed to basic residues. Disordered regions lie at residues 116 to 173 (KKVA…DATD) and 190 to 209 (DGAP…SSLT). Over residues 133-166 (AGTPATAPLSSATSSTTTHNSSGGSDSGDQCGTS) the composition is skewed to low complexity.

It is found in the nucleus. Its function is as follows. Transcription factor that positively regulates genes involved in anthocyanin biosynthesis such as A1. In Zea mays (Maize), this protein is Myb-related protein Zm1.